Consider the following 267-residue polypeptide: Putative F-box protein At5g38810 (267 aa).

Residues 4 to 53 (RKTFDSIPDDLFVEIALRLSSKSIARCRCVSKLWASILYRQDFTELFITK) form the F-box domain.

In Arabidopsis thaliana (Mouse-ear cress), this protein is Putative F-box protein At5g38810.